The following is a 1829-amino-acid chain: Unconventional myosin-Va (1829 aa).

The Myosin N-terminal SH3-like domain occupies 8 to 60 (TKYARVWIPDPEEVWKSAELLKDYKPGDKVLQLRLEEGKDLEYCLDPKTKELP). A Myosin motor domain is found at 69–764 (VGENDLTALS…QVAYLEKIRA (696 aa)). 163 to 170 (GESGAGKT) provides a ligand contact to ATP. Positions 599-635 (AISPTSATPSGRVPLSRTPVKPAKARPGQTSKEHKKT) are disordered. The tract at residues 644–666 (LHLLMETLNATTPHYVRCIKPND) is actin-binding. 6 consecutive IQ domains span residues 767–789 (LRAA…KYMR), 790–814 (MRRA…TFLR), 815–837 (RTRA…RYQC), 838–862 (MRDA…QMML), 863–887 (REHK…HRTL), and 888–915 (KAIV…EARS). Coiled-coil stretches lie at residues 916–1239 (VERY…PEVT) and 1315–1419 (GLKE…ELEV). Disordered regions lie at residues 1106–1148 (IPKP…SEKK) and 1170–1199 (KQSL…PIRG). A compositionally biased stretch (polar residues) spans 1117–1131 (THSSNESEYTFSSEI). Basic and acidic residues-rich tracts occupy residues 1137 to 1148 (LPLRMEEPSEKK) and 1170 to 1196 (KQSL…ERPP). The Dilute domain occupies 1508–1784 (TSTINGIKKV…IRTIQLRLRD (277 aa)). Position 1734 is a phosphothreonine (T1734).

It belongs to the TRAFAC class myosin-kinesin ATPase superfamily. Myosin family. As to quaternary structure, may be a homodimer, which associates with multiple calmodulin or myosin light chains. In terms of tissue distribution, neuronal and non-neuronal cells of the brain.

It is found in the golgi apparatus membrane. It catalyses the reaction ATP + H2O = ADP + phosphate + H(+). In terms of biological role, processive actin-based motor that can move in large steps approximating the 36-nm pseudo-repeat of the actin filament. Can hydrolyze ATP in the presence of actin, which is essential for its function as a motor protein. Involved in melanosome transport. Also mediates the transport of vesicles to the plasma membrane. May also be required for some polarization process involved in dendrite formation. The sequence is that of Unconventional myosin-Va (MYO5A) from Gallus gallus (Chicken).